The following is a 260-amino-acid chain: Protein FAM220A (260 aa).

2 disordered regions span residues 1 to 75 (MKAG…SKAS) and 129 to 158 (GSDWPGREPRATDNRGQYLKGESWVSGRPG). A compositionally biased stretch (polar residues) spans 35–47 (RNPSPSVVPSWTD).

Interacts with transcriptional activator STAT3; the interaction occurs in both the nucleus and the cytoplasm, is enhanced by IL6 and promotes STAT3 dephosphorylation, leading to negative regulation of STAT3 transcriptional activator activity. Can interact with both unphosphorylated and phosphorylated STAT3 but interacts preferentially with phosphorylated STAT3 in the nucleus. Interacts with protein phosphatase PTPN2/TC45; this promotes interaction of PTPN2 with STAT3, leading to dephosphorylation of STAT3 by PTPN2. Expressed at high levels in the testis where it is detected within elongated spermatids during the late stages (steps 9-16) of haploid germ cell development and in the tubular lumen (at protein level).

Its subcellular location is the nucleus. The protein localises to the cytoplasm. It is found in the cytoplasmic vesicle. The protein resides in the secretory vesicle. It localises to the acrosome. Its function is as follows. Promotes dephosphorylation of transcriptional activator STAT3 by interacting with both STAT3 and protein phosphatase PTPN2. This promotes interaction of PTPN2 with STAT3 and mediates STAT3 dephosphorylation by PTPN2, leading to negative regulation of STAT3 transcriptional activator activity. May be required for spermiogenesis or sperm function. The sequence is that of Protein FAM220A from Mus musculus (Mouse).